The chain runs to 113 residues: Urease subunit beta (113 aa).

This sequence belongs to the urease beta subunit family. As to quaternary structure, heterotrimer of UreA (gamma), UreB (beta) and UreC (alpha) subunits. Three heterotrimers associate to form the active enzyme.

It localises to the cytoplasm. It carries out the reaction urea + 2 H2O + H(+) = hydrogencarbonate + 2 NH4(+). The protein operates within nitrogen metabolism; urea degradation; CO(2) and NH(3) from urea (urease route): step 1/1. This Cyanothece sp. (strain PCC 7425 / ATCC 29141) protein is Urease subunit beta.